The primary structure comprises 166 residues: Small ribosomal subunit protein uS5 (166 aa).

The region spanning tyrosine 12–valine 75 is the S5 DRBM domain.

Belongs to the universal ribosomal protein uS5 family. In terms of assembly, part of the 30S ribosomal subunit. Contacts proteins S4 and S8.

In terms of biological role, with S4 and S12 plays an important role in translational accuracy. Its function is as follows. Located at the back of the 30S subunit body where it stabilizes the conformation of the head with respect to the body. This Ectopseudomonas mendocina (strain ymp) (Pseudomonas mendocina) protein is Small ribosomal subunit protein uS5.